Consider the following 373-residue polypeptide: 4-hydroxy-3-methylbut-2-en-1-yl diphosphate synthase (flavodoxin) (373 aa).

Residues Cys-270, Cys-273, Cys-305, and Glu-312 each coordinate [4Fe-4S] cluster.

This sequence belongs to the IspG family. [4Fe-4S] cluster serves as cofactor.

It catalyses the reaction (2E)-4-hydroxy-3-methylbut-2-enyl diphosphate + oxidized [flavodoxin] + H2O + 2 H(+) = 2-C-methyl-D-erythritol 2,4-cyclic diphosphate + reduced [flavodoxin]. The protein operates within isoprenoid biosynthesis; isopentenyl diphosphate biosynthesis via DXP pathway; isopentenyl diphosphate from 1-deoxy-D-xylulose 5-phosphate: step 5/6. Its function is as follows. Converts 2C-methyl-D-erythritol 2,4-cyclodiphosphate (ME-2,4cPP) into 1-hydroxy-2-methyl-2-(E)-butenyl 4-diphosphate. The polypeptide is 4-hydroxy-3-methylbut-2-en-1-yl diphosphate synthase (flavodoxin) (Sodalis glossinidius (strain morsitans)).